Reading from the N-terminus, the 232-residue chain is U2 small nuclear ribonucleoprotein B'' (232 aa).

The 80-residue stretch at 10–89 folds into the RRM 1 domain; that stretch reads QSIYIQNLNE…KPMRLQYAKA (80 aa). A disordered region spans residues 100 to 157; that stretch reads TFVPKDKKRKQEEKVERKREDSQRPNTANGPSANGPSANNGVPAPSFQPSGQETMPPN. The span at 108 to 122 shows a compositional bias: basic and acidic residues; that stretch reads RKQEEKVERKREDSQ. Composition is skewed to polar residues over residues 123 to 139 and 146 to 156; these read RPNT…SANN and FQPSGQETMPP. An RRM 2 domain is found at 158–232; it reads NILFIQNLPH…NPMVISFAKK (75 aa).

It belongs to the RRM U1 A/B'' family. In terms of assembly, component of the spliceosome where it is associated with snRNP U2.

Its subcellular location is the nucleus. It localises to the cajal body. The protein localises to the nucleoplasm. It is found in the cytoplasm. Its function is as follows. Involved in nuclear pre-mRNA splicing. This chain is U2 small nuclear ribonucleoprotein B'' (U2B''), found in Arabidopsis thaliana (Mouse-ear cress).